We begin with the raw amino-acid sequence, 445 residues long: MSTILKSLPKGENVGIAFSGGLDTSAALLWMKQKGARVFAYTANLGQPDEADYDEIPRKAMEFGAEKARLVDCRSQLVHEGIAAIQSGAFHVSTGGVAYFNTTPLGRAVTGTMLVSAMKEDGVNIWGDGSTYKGNDIERFYRYGLLTNPDLRIYKPWLDQQFIDELGGRAEMSAFMTAHGFAYKMSSEKAYSTDSNLLGATHEAKDLEHLDSGIRIVNPIMGVPFWRDDCAVAAETVSVRFAEGQPVALNGKTFTDPVALFLEANAIGGRHGLGMSDQIENRIIEAKSRGIYEAPAMALLHIAYERLVTGIHNEDTIEQYRISGMRLGRLLYQGRWFDSQALMLRETAQRWVARAITGEVTLELRRGNDYSILNTQSPNLTYAPERLSMEKVEDAPFTPGDRIGQLTMRNLDITDTRAKLDLYAKSGLLSAGEGSHIPKLESDKG.

ATP contacts are provided by residues 17–25 (AFSGGLDTS) and Ala-43. Residue Tyr-99 participates in L-citrulline binding. Gly-129 and Thr-131 together coordinate ATP. L-aspartate-binding residues include Thr-131, Asn-135, and Asp-136. Asn-135 is an L-citrulline binding site. Residue Asp-136 participates in ATP binding. Positions 139 and 192 each coordinate L-citrulline. Asp-194 is an ATP binding site. L-citrulline contacts are provided by Thr-201, Glu-203, and Glu-280.

Belongs to the argininosuccinate synthase family. Type 2 subfamily. As to quaternary structure, homotetramer.

It localises to the cytoplasm. The enzyme catalyses L-citrulline + L-aspartate + ATP = 2-(N(omega)-L-arginino)succinate + AMP + diphosphate + H(+). It functions in the pathway amino-acid biosynthesis; L-arginine biosynthesis; L-arginine from L-ornithine and carbamoyl phosphate: step 2/3. The polypeptide is Argininosuccinate synthase (Rhodopseudomonas palustris (strain BisB18)).